Here is a 295-residue protein sequence, read N- to C-terminus: Pyridoxal 5'-phosphate synthase subunit PdxS (295 aa).

Residue Asp25 participates in D-ribose 5-phosphate binding. Lys82 functions as the Schiff-base intermediate with D-ribose 5-phosphate in the catalytic mechanism. Residue Gly154 coordinates D-ribose 5-phosphate. Residue Arg166 participates in D-glyceraldehyde 3-phosphate binding. D-ribose 5-phosphate-binding positions include Gly215 and 236 to 237 (GS).

This sequence belongs to the PdxS/SNZ family. In terms of assembly, in the presence of PdxT, forms a dodecamer of heterodimers.

It catalyses the reaction aldehydo-D-ribose 5-phosphate + D-glyceraldehyde 3-phosphate + L-glutamine = pyridoxal 5'-phosphate + L-glutamate + phosphate + 3 H2O + H(+). The protein operates within cofactor biosynthesis; pyridoxal 5'-phosphate biosynthesis. Its function is as follows. Catalyzes the formation of pyridoxal 5'-phosphate from ribose 5-phosphate (RBP), glyceraldehyde 3-phosphate (G3P) and ammonia. The ammonia is provided by the PdxT subunit. Can also use ribulose 5-phosphate and dihydroxyacetone phosphate as substrates, resulting from enzyme-catalyzed isomerization of RBP and G3P, respectively. This is Pyridoxal 5'-phosphate synthase subunit PdxS from Staphylococcus carnosus (strain TM300).